A 121-amino-acid chain; its full sequence is Large ribosomal subunit protein uL14 (121 aa).

The protein belongs to the universal ribosomal protein uL14 family. In terms of assembly, part of the 50S ribosomal subunit. Forms a cluster with proteins L3 and L19. In the 70S ribosome, L14 and L19 interact and together make contacts with the 16S rRNA in bridges B5 and B8.

Binds to 23S rRNA. Forms part of two intersubunit bridges in the 70S ribosome. This chain is Large ribosomal subunit protein uL14, found in Akkermansia muciniphila (strain ATCC BAA-835 / DSM 22959 / JCM 33894 / BCRC 81048 / CCUG 64013 / CIP 107961 / Muc).